Consider the following 357-residue polypeptide: Peptide chain release factor 1 (357 aa).

Gln235 carries the post-translational modification N5-methylglutamine. A disordered region spans residues 285–305 (KRHNEASAMRSAQVGSGDRSE).

This sequence belongs to the prokaryotic/mitochondrial release factor family. Methylated by PrmC. Methylation increases the termination efficiency of RF1.

Its subcellular location is the cytoplasm. In terms of biological role, peptide chain release factor 1 directs the termination of translation in response to the peptide chain termination codons UAG and UAA. In Chlamydia pneumoniae (Chlamydophila pneumoniae), this protein is Peptide chain release factor 1 (prfA).